Reading from the N-terminus, the 296-residue chain is Stanniocalcin-2 (296 aa).

The N-terminal stretch at 1–24 is a signal peptide; the sequence is MCAERLGQFVTLALVFATLDPAQG. Residues 21 to 44 are disordered; the sequence is PAQGTDSTNPPEGPQDRSSQQKGR. A compositionally biased stretch (polar residues) spans 24–44; that stretch reads GTDSTNPPEGPQDRSSQQKGR. Residue Asn73 is glycosylated (N-linked (GlcNAc...) asparagine). The disordered stretch occupies residues 218-296; that stretch reads PPTAAPEHQP…EQSEYSDIRR (79 aa). Positions 240–258 are enriched in basic and acidic residues; it reads RDTDHHLTANRGAKGERGS. Over residues 272–282 the composition is skewed to low complexity; the sequence is GQSAQGPSGSS.

It belongs to the stanniocalcin family. In terms of assembly, homodimer; disulfide-linked. In terms of tissue distribution, found in a variety of tissues including skeletal muscle, small intestine, kidney, liver and brain.

It is found in the secreted. Has an anti-hypocalcemic action on calcium and phosphate homeostasis. This is Stanniocalcin-2 (Stc2) from Mus musculus (Mouse).